The chain runs to 410 residues: Multifunctional CCA protein (410 aa).

Gly8 and Arg11 together coordinate ATP. CTP-binding residues include Gly8 and Arg11. Mg(2+)-binding residues include Glu21 and Asp23. Residues Arg91, Arg137, and Arg140 each coordinate ATP. Residues Arg91, Arg137, and Arg140 each coordinate CTP. Residues 228–329 (TGIHSLMALR…VKLLEQVDAF (102 aa)) enclose the HD domain.

It belongs to the tRNA nucleotidyltransferase/poly(A) polymerase family. Bacterial CCA-adding enzyme type 1 subfamily. As to quaternary structure, monomer. Can also form homodimers and oligomers. Requires Mg(2+) as cofactor. The cofactor is Ni(2+).

The enzyme catalyses a tRNA precursor + 2 CTP + ATP = a tRNA with a 3' CCA end + 3 diphosphate. It carries out the reaction a tRNA with a 3' CCA end + 2 CTP + ATP = a tRNA with a 3' CCACCA end + 3 diphosphate. Functionally, catalyzes the addition and repair of the essential 3'-terminal CCA sequence in tRNAs without using a nucleic acid template. Adds these three nucleotides in the order of C, C, and A to the tRNA nucleotide-73, using CTP and ATP as substrates and producing inorganic pyrophosphate. tRNA 3'-terminal CCA addition is required both for tRNA processing and repair. Also involved in tRNA surveillance by mediating tandem CCA addition to generate a CCACCA at the 3' terminus of unstable tRNAs. While stable tRNAs receive only 3'-terminal CCA, unstable tRNAs are marked with CCACCA and rapidly degraded. This is Multifunctional CCA protein from Legionella pneumophila (strain Paris).